A 430-amino-acid polypeptide reads, in one-letter code: Forkhead box protein N2 (430 aa).

Residues 1–47 (MGPATGMTPDKNIESPTAEKVPGLSQTENMGSLPEEVGAARPKASMV) are disordered. The fork-head DNA-binding region spans 108 to 204 (KPPYSFSLLI…QALKKQPFSS (97 aa)). Disordered regions lie at residues 299 to 326 (NIDPKEDHNYSASGGDSQRCESRSSVSS) and 338 to 391 (PKNS…EASQ). A compositionally biased stretch (acidic residues) spans 355 to 366 (DDTDIDYEEDTL). Residues 381 to 390 (HGSKLRKEAS) show a composition bias toward basic and acidic residues.

In terms of tissue distribution, expressed in the developing eye from stage 23. Localized to the prospective retinal layer and a layer of cells lateral to the ventricular zone. At stage 29, expression extends to the branchial arches and the brain. At stage 33/34, expressed in the vagal ganglion. At stage 36, expression in the retina decreases. Not expressed in the eye lens.

It is found in the nucleus. The protein is Forkhead box protein N2 of Xenopus laevis (African clawed frog).